A 461-amino-acid chain; its full sequence is D-phenylhydantoinase (461 aa).

The a divalent metal cation site is built by His59, His61, and Lys151. Lys151 bears the N6-carboxylysine mark. Tyr156 contributes to the substrate binding site. A divalent metal cation is bound by residues His182 and His239. Ser286 is a substrate binding site. Asp313 serves as a coordination point for a divalent metal cation. Residue Asn335 coordinates substrate.

It belongs to the metallo-dependent hydrolases superfamily. Hydantoinase/dihydropyrimidinase family. In terms of assembly, homotetramer. The cofactor is a divalent metal cation. Carboxylation allows a single lysine to coordinate two divalent metal cations.

The catalysed reaction is D-5-phenylhydantoin + H2O = N-carbamoyl-D-phenylglycine + H(+). Catalyzes the stereospecific hydrolysis of the cyclic amide bond of D-hydantoin derivatives with an aromatic side chains at the 5'-position. Has no activity on dihydropyrimidines. The physiological function is unknown. The sequence is that of D-phenylhydantoinase from Escherichia coli O6:K15:H31 (strain 536 / UPEC).